The primary structure comprises 347 residues: MSVMFDPQAAIYPFPPKPTPLNDDEKQFYREKIKRLLKERNAVMVAHYYTDPEIQQLAEETGGCISDSLEMARFGAKHAASTLLVAGVRFMGETAKILSPEKNILMPTLAAECSLDLGCPIDEFSAFCDAHPDRTVVVYANTSAAVKARADWVVTSSIAVELIEHLDSLGEKIIWAPDRHLGNYVQKQTGADVLCWQGACIVHDEFKTQALTRLKKIYPDAALLVHPESPQSIVEMADAVGSTSQLIKAAKTLPHRQLIVATDRGIFYKMQQAVPEKELLEAPTAGEGATCRSCAHCPWMAMNGLKAIAEGLEQGGAAHEIQVDAALREGALLPLNRMLDFAATLRA.

The iminosuccinate site is built by H47 and S68. Position 113 (C113) interacts with [4Fe-4S] cluster. Iminosuccinate contacts are provided by residues 139–141 and S156; that span reads YAN. Residue C200 participates in [4Fe-4S] cluster binding. Iminosuccinate contacts are provided by residues 226–228 and T243; that span reads HPE. Residue C297 participates in [4Fe-4S] cluster binding.

Belongs to the quinolinate synthase family. Type 1 subfamily. The cofactor is [4Fe-4S] cluster.

It localises to the cytoplasm. It catalyses the reaction iminosuccinate + dihydroxyacetone phosphate = quinolinate + phosphate + 2 H2O + H(+). The protein operates within cofactor biosynthesis; NAD(+) biosynthesis; quinolinate from iminoaspartate: step 1/1. In terms of biological role, catalyzes the condensation of iminoaspartate with dihydroxyacetone phosphate to form quinolinate. The sequence is that of Quinolinate synthase from Salmonella paratyphi A (strain ATCC 9150 / SARB42).